The chain runs to 40 residues: Hemoglobin subunit alpha-2 (40 aa).

One can recognise a Globin domain in the interval 1–40 (VGPHLDDYGGEALHRNFEVYPQTKTYFPHFDASAGSNQLK).

It belongs to the globin family. As to quaternary structure, heterotetramer of two alpha chains and two beta chains. Red blood cells.

In terms of biological role, involved in oxygen transport from the lung to the various peripheral tissues. The sequence is that of Hemoglobin subunit alpha-2 from Saara hardwickii (Indian spiny-tailed lizard).